The sequence spans 364 residues: 3-dehydroquinate synthase (364 aa).

NAD(+)-binding positions include aspartate 75 to lysine 80, glycine 109 to aspartate 113, threonine 133 to threonine 134, lysine 146, lysine 155, and threonine 173 to threonine 176. Zn(2+) contacts are provided by glutamate 188, histidine 251, and histidine 268.

It belongs to the sugar phosphate cyclases superfamily. Dehydroquinate synthase family. Requires Co(2+) as cofactor. Zn(2+) is required as a cofactor. It depends on NAD(+) as a cofactor.

The protein localises to the cytoplasm. It carries out the reaction 7-phospho-2-dehydro-3-deoxy-D-arabino-heptonate = 3-dehydroquinate + phosphate. Its pathway is metabolic intermediate biosynthesis; chorismate biosynthesis; chorismate from D-erythrose 4-phosphate and phosphoenolpyruvate: step 2/7. Functionally, catalyzes the conversion of 3-deoxy-D-arabino-heptulosonate 7-phosphate (DAHP) to dehydroquinate (DHQ). The sequence is that of 3-dehydroquinate synthase from Dechloromonas aromatica (strain RCB).